The sequence spans 658 residues: UvrABC system protein B (658 aa).

A Helicase ATP-binding domain is found at Gln25–Arg416. Gly38–Thr45 provides a ligand contact to ATP. The Beta-hairpin motif lies at His91 to Ile114. The 175-residue stretch at Ala433 to Ser607 folds into the Helicase C-terminal domain. The UVR domain occupies Glu623–Met658.

Belongs to the UvrB family. Forms a heterotetramer with UvrA during the search for lesions. Interacts with UvrC in an incision complex.

The protein resides in the cytoplasm. In terms of biological role, the UvrABC repair system catalyzes the recognition and processing of DNA lesions. A damage recognition complex composed of 2 UvrA and 2 UvrB subunits scans DNA for abnormalities. Upon binding of the UvrA(2)B(2) complex to a putative damaged site, the DNA wraps around one UvrB monomer. DNA wrap is dependent on ATP binding by UvrB and probably causes local melting of the DNA helix, facilitating insertion of UvrB beta-hairpin between the DNA strands. Then UvrB probes one DNA strand for the presence of a lesion. If a lesion is found the UvrA subunits dissociate and the UvrB-DNA preincision complex is formed. This complex is subsequently bound by UvrC and the second UvrB is released. If no lesion is found, the DNA wraps around the other UvrB subunit that will check the other stand for damage. The protein is UvrABC system protein B of Helicobacter hepaticus (strain ATCC 51449 / 3B1).